The chain runs to 120 residues: Small ribosomal subunit protein bS16 (120 aa).

A disordered region spans residues 81 to 120; the sequence is GLAKRPARNNPQKAEPGEKSKERAAKRAEKAAAPAEDAAA. A compositionally biased stretch (basic and acidic residues) spans 95–110; sequence EPGEKSKERAAKRAEK. The span at 111 to 120 shows a compositional bias: low complexity; sequence AAAPAEDAAA.

Belongs to the bacterial ribosomal protein bS16 family.

This chain is Small ribosomal subunit protein bS16, found in Methylorubrum populi (strain ATCC BAA-705 / NCIMB 13946 / BJ001) (Methylobacterium populi).